A 498-amino-acid chain; its full sequence is Mitogen-activated protein kinase 15 (498 aa).

The region spanning Tyr13 to Phe304 is the Protein kinase domain. Residues Ile19 to Val27 and Lys42 contribute to the ATP site. Asp139 serves as the catalytic Proton acceptor. The residue at position 175 (Thr175) is a Phosphothreonine. The TXY signature appears at Thr175–Tyr177. At Tyr177 the chain carries Phosphotyrosine. Disordered regions lie at residues Ser388–Arg411 and Ser470–Pro498. Residues Leu486–Pro498 show a composition bias toward polar residues.

The protein belongs to the protein kinase superfamily. CMGC Ser/Thr protein kinase family. MAP kinase subfamily. Dually phosphorylated on Thr-175 and Tyr-177, which activates the enzyme.

It carries out the reaction L-seryl-[protein] + ATP = O-phospho-L-seryl-[protein] + ADP + H(+). The enzyme catalyses L-threonyl-[protein] + ATP = O-phospho-L-threonyl-[protein] + ADP + H(+). Its activity is regulated as follows. Activated by threonine and tyrosine phosphorylation. This chain is Mitogen-activated protein kinase 15 (MPK15), found in Oryza sativa subsp. japonica (Rice).